A 534-amino-acid polypeptide reads, in one-letter code: Glucans biosynthesis protein D (534 aa).

The segment at residues Met-1–Ala-30 is a signal peptide (tat-type signal).

It belongs to the OpgD/OpgG family. Predicted to be exported by the Tat system. The position of the signal peptide cleavage has not been experimentally proven.

The protein resides in the periplasm. It participates in glycan metabolism; osmoregulated periplasmic glucan (OPG) biosynthesis. Probably involved in the control of the structural glucose backbone of osmoregulated periplasmic glucans (OPGs). The polypeptide is Glucans biosynthesis protein D (Xanthomonas oryzae pv. oryzae (strain KACC10331 / KXO85)).